A 764-amino-acid polypeptide reads, in one-letter code: DNA polymerase 3 (764 aa).

The protein belongs to the DNA polymerase type-B family.

It catalyses the reaction DNA(n) + a 2'-deoxyribonucleoside 5'-triphosphate = DNA(n+1) + diphosphate. This is DNA polymerase 3 (dpo3) from Saccharolobus solfataricus (strain ATCC 35092 / DSM 1617 / JCM 11322 / P2) (Sulfolobus solfataricus).